A 292-amino-acid polypeptide reads, in one-letter code: tRNA pseudouridine synthase B (292 aa).

The Nucleophile role is filled by D38.

The protein belongs to the pseudouridine synthase TruB family. Type 1 subfamily.

The enzyme catalyses uridine(55) in tRNA = pseudouridine(55) in tRNA. Responsible for synthesis of pseudouridine from uracil-55 in the psi GC loop of transfer RNAs. The protein is tRNA pseudouridine synthase B of Streptococcus pneumoniae serotype 2 (strain D39 / NCTC 7466).